We begin with the raw amino-acid sequence, 4299 residues long: DNA-dependent protein kinase catalytic subunit (4299 aa).

Residues 551–590 (KDLNSTIKKENNNNNNNKNKNNNNNQTLTKEEISKSIKKL) are a coiled coil. Disordered stretches follow at residues 557-577 (IKKE…NNQT), 613-633 (DEND…DQDN), 878-917 (NSSD…MKFK), and 1206-1230 (SSSK…EDGT). Low complexity-rich tracts occupy residues 562-575 (NNNN…NNNN), 617-631 (NNSN…NNDQ), 878-893 (NSSD…IDSG), and 1206-1226 (SSSK…NNNS). Ser2789 carries the phosphoserine; by autocatalysis modification. A phosphothreonine; by autocatalysis mark is found at Thr2814 and Thr2822. Over residues 2832–2867 (SSSQSYGGTNNNTGSSQLSSSSSSSGSQSSSQNNSS) the composition is skewed to low complexity. 2 disordered regions span residues 2832-2881 (SSSQ…PKLI) and 3535-3559 (TTSS…SSSQ). One can recognise an FAT domain in the interval 3031–3707 (KIKDISLNSN…YFPFKISSEQ (677 aa)). One can recognise a PI3K/PI4K catalytic domain in the interval 3887 to 4226 (FDTNVLVMGS…AKKKLELVNP (340 aa)). The tract at residues 3893–3899 (VMGSLRK) is G-loop. Residues 4092-4100 (GIGDRHLEN) form a catalytic loop region. An activation loop region spans residues 4112–4137 (GIDFGHAFGTATQFLPIPELMPFRLT). The FATC domain occupies 4267 to 4299 (VCSSVKEQIDCLIDQSTDPNILSRAWVGWNGAL).

This sequence belongs to the PI3/PI4-kinase family. DNAPK subfamily. Post-translationally, may be phosphorylated upon DNA damage. Could be autophosphorylated. Autophosphorylation induces a conformational change that leads to remodeling of the DNA-PK complex, requisite for efficient end processing and DNA repair. Autophosphorylated on Ser-2789, Thr-2814 and Thr-2822. Ser-2789 is a DNA damage-inducible phosphorylation site (inducible with ionizing radiation, IR).

The protein resides in the nucleus. It is found in the nucleolus. It carries out the reaction L-seryl-[protein] + ATP = O-phospho-L-seryl-[protein] + ADP + H(+). It catalyses the reaction L-threonyl-[protein] + ATP = O-phospho-L-threonyl-[protein] + ADP + H(+). Its activity is regulated as follows. Inhibited by wortmannin. Activity of the enzyme seems to be attenuated by autophosphorylation. In terms of biological role, serine/threonine-protein kinase that acts as a molecular sensor for DNA damage. Is recruited to DNA ends by the Ku70/Ku80 heterodimer and is involved in DNA non-homologous end joining (NHEJ) required for double-strand break (DSB) repair and V(D)J recombination. This activity is only apparent when DNA damage is administered in G1 phase of the cell cycle. Required for efficient signaling of DNA double-stranded breaks via phosphorylation of H2AX during G1. The chain is DNA-dependent protein kinase catalytic subunit (dnapkcs) from Dictyostelium discoideum (Social amoeba).